The sequence spans 326 residues: Adenosine receptor A1 (326 aa).

The Extracellular portion of the chain corresponds to 1 to 10 (MPPYISAFQA). Residues 11–33 (AYIGIEVLIALVSVPGNVLVIWA) form a helical membrane-spanning segment. At 34–46 (VKVNQALRDATFC) the chain is on the cytoplasmic side. A helical transmembrane segment spans residues 47–69 (FIVSLAVADVAVGALVIPLAILI). At 70-80 (NIGPQTYFHTC) the chain is on the extracellular side. C80 and C169 are disulfide-bonded. A helical transmembrane segment spans residues 81–102 (LMVACPVLILTQSSILALLAIA). Topologically, residues 103 to 123 (VDRYLRVKIPLRYKTVVTQRR) are cytoplasmic. Residues 124–146 (AAVAIAGCWILSLVVGLTPMFGW) traverse the membrane as a helical segment. Over 147–176 (NNLSVVEQDWRANGSVGEPVIKCEFEKVIS) the chain is Extracellular. Residues N148 and N159 are each glycosylated (N-linked (GlcNAc...) asparagine). Residues 177 to 201 (MEYMVYFNFFVWVLPPLLLMVLIYL) form a helical membrane-spanning segment. Over 202–235 (EVFYLIRKQLNKKVSASSGDPQKYYGKELKIAKS) the chain is Cytoplasmic. The helical transmembrane segment at 236–259 (LALILFLFALSWLPLHILNCITLF) threads the bilayer. At 260–267 (CPTCQKPS) the chain is on the extracellular side. A helical transmembrane segment spans residues 268 to 292 (ILIYIAIFLTHGNSAMNPIVYAFRI). Residues 293–326 (HKFRVTFLKIWNDHFRCQPKPPIDEDLPEEKAED) are Cytoplasmic-facing. The S-palmitoyl cysteine moiety is linked to residue C309.

The protein belongs to the G-protein coupled receptor 1 family. In terms of tissue distribution, widely expressed in brain and spinal cord.

It is found in the cell membrane. Functionally, receptor for adenosine. The activity of this receptor is mediated by G proteins which inhibit adenylyl cyclase. This Rattus norvegicus (Rat) protein is Adenosine receptor A1 (Adora1).